The following is a 572-amino-acid chain: Light-independent protochlorophyllide reductase subunit N (572 aa).

[4Fe-4S] cluster is bound by residues C106, C131, and C191. Residues 249–268 (SLDSMKLPSGGREKQINDVN) form a disordered region.

Belongs to the BchN/ChlN family. As to quaternary structure, protochlorophyllide reductase is composed of three subunits; ChlL, ChlN and ChlB. Forms a heterotetramer of two ChlB and two ChlN subunits. The cofactor is [4Fe-4S] cluster.

The protein localises to the plastid. It is found in the chloroplast. The enzyme catalyses chlorophyllide a + oxidized 2[4Fe-4S]-[ferredoxin] + 2 ADP + 2 phosphate = protochlorophyllide a + reduced 2[4Fe-4S]-[ferredoxin] + 2 ATP + 2 H2O. It participates in porphyrin-containing compound metabolism; chlorophyll biosynthesis (light-independent). Component of the dark-operative protochlorophyllide reductase (DPOR) that uses Mg-ATP and reduced ferredoxin to reduce ring D of protochlorophyllide (Pchlide) to form chlorophyllide a (Chlide). This reaction is light-independent. The NB-protein (ChlN-ChlB) is the catalytic component of the complex. The polypeptide is Light-independent protochlorophyllide reductase subunit N (Oltmannsiellopsis viridis (Marine flagellate)).